Here is a 418-residue protein sequence, read N- to C-terminus: Flavin-dependent L-tryptophan oxidase VioA (418 aa).

Gly13 serves as a coordination point for Mg(2+). Ser15 is an FAD binding site. Gly16 lines the Mg(2+) pocket. Residues Asp38, Arg46, and Arg64 each contribute to the FAD site. Substrate-binding residues include Arg64 and His163. FAD is bound at residue Leu208. Ala240 is a binding site for Mg(2+). A substrate-binding site is contributed by Tyr309. Met398 is a binding site for FAD.

This sequence belongs to the flavin monoamine oxidase family. Homodimer. The cofactor is FAD. Requires Mg(2+) as cofactor.

The enzyme catalyses L-tryptophan + O2 = 2-iminio-3-(indol-3-yl)propanoate + H2O2. It catalyses the reaction 7-chloro-L-tryptophan + O2 = 3-(7-chloroindol-3-yl)-2-iminopropanoate + H2O2. It participates in pigment biosynthesis; violacein biosynthesis. The enzyme generates the imine form of indole 3-pyruvate (IPA) from L-tryptophan (L-Trp), with concomitant two-electron reduction of O(2) to H(2)O(2). In Chromobacterium violaceum (strain ATCC 12472 / DSM 30191 / JCM 1249 / CCUG 213 / NBRC 12614 / NCIMB 9131 / NCTC 9757 / MK), this protein is Flavin-dependent L-tryptophan oxidase VioA (vioA).